A 529-amino-acid polypeptide reads, in one-letter code: Bifunctional purine biosynthesis protein PurH (529 aa).

The region spanning 1-148 (MQQRRPVRRA…KNHKDVAIVV (148 aa)) is the MGS-like domain. Position 287 is an N6-acetyllysine (lysine 287).

Belongs to the PurH family.

The catalysed reaction is (6R)-10-formyltetrahydrofolate + 5-amino-1-(5-phospho-beta-D-ribosyl)imidazole-4-carboxamide = 5-formamido-1-(5-phospho-D-ribosyl)imidazole-4-carboxamide + (6S)-5,6,7,8-tetrahydrofolate. It carries out the reaction IMP + H2O = 5-formamido-1-(5-phospho-D-ribosyl)imidazole-4-carboxamide. Its pathway is purine metabolism; IMP biosynthesis via de novo pathway; 5-formamido-1-(5-phospho-D-ribosyl)imidazole-4-carboxamide from 5-amino-1-(5-phospho-D-ribosyl)imidazole-4-carboxamide (10-formyl THF route): step 1/1. The protein operates within purine metabolism; IMP biosynthesis via de novo pathway; IMP from 5-formamido-1-(5-phospho-D-ribosyl)imidazole-4-carboxamide: step 1/1. The chain is Bifunctional purine biosynthesis protein PurH from Escherichia coli O17:K52:H18 (strain UMN026 / ExPEC).